Reading from the N-terminus, the 274-residue chain is tRNA uridine(34) hydroxylase (274 aa).

The region spanning 121–217 is the Rhodanese domain; that stretch reads SRSDVYTIDT…YFKSTKNTNN (97 aa). The Cysteine persulfide intermediate role is filled by Cys-177.

Belongs to the TrhO family.

The catalysed reaction is uridine(34) in tRNA + AH2 + O2 = 5-hydroxyuridine(34) in tRNA + A + H2O. In terms of biological role, catalyzes oxygen-dependent 5-hydroxyuridine (ho5U) modification at position 34 in tRNAs. The chain is tRNA uridine(34) hydroxylase from Ehrlichia canis (strain Jake).